Consider the following 55-residue polypeptide: Large ribosomal subunit protein bL33 (55 aa).

It belongs to the bacterial ribosomal protein bL33 family.

This Methylobacterium sp. (strain 4-46) protein is Large ribosomal subunit protein bL33.